Consider the following 451-residue polypeptide: Uronate isomerase (451 aa).

It belongs to the metallo-dependent hydrolases superfamily. Uronate isomerase family.

The catalysed reaction is D-glucuronate = D-fructuronate. It carries out the reaction aldehydo-D-galacturonate = keto-D-tagaturonate. Its pathway is carbohydrate metabolism; pentose and glucuronate interconversion. This is Uronate isomerase from Thermotoga neapolitana (strain ATCC 49049 / DSM 4359 / NBRC 107923 / NS-E).